The sequence spans 71 residues: Translation initiation factor IF-1 (71 aa).

One can recognise an S1-like domain in the interval 1–71; sequence MSKDDLIQFT…LTKGRVIHRH (71 aa).

The protein belongs to the IF-1 family. In terms of assembly, component of the 30S ribosomal translation pre-initiation complex which assembles on the 30S ribosome in the order IF-2 and IF-3, IF-1 and N-formylmethionyl-tRNA(fMet); mRNA recruitment can occur at any time during PIC assembly.

The protein resides in the cytoplasm. One of the essential components for the initiation of protein synthesis. Stabilizes the binding of IF-2 and IF-3 on the 30S subunit to which N-formylmethionyl-tRNA(fMet) subsequently binds. Helps modulate mRNA selection, yielding the 30S pre-initiation complex (PIC). Upon addition of the 50S ribosomal subunit IF-1, IF-2 and IF-3 are released leaving the mature 70S translation initiation complex. The chain is Translation initiation factor IF-1 from Rickettsia typhi (strain ATCC VR-144 / Wilmington).